The primary structure comprises 411 residues: Translation initiation factor 2 subunit gamma (411 aa).

In terms of domain architecture, tr-type G spans 9 to 203 (QAEVNIGMVG…AIQDFIPTPK (195 aa)). The tract at residues 18–25 (GHVDHGKT) is G1. 4 residues coordinate Mg(2+): Asp-21, Thr-25, Gly-46, and Ser-48. 21–26 (DHGKTS) contributes to the GTP binding site. The tract at residues 46 to 50 (GISIR) is G2. Cys-61, Cys-64, Cys-73, and Cys-76 together coordinate Zn(2+). The G3 stretch occupies residues 90-93 (DSPG). GTP contacts are provided by residues 146–149 (NKID) and 181–183 (SAH). The interval 146-149 (NKID) is G4. The interval 181–183 (SAH) is G5.

The protein belongs to the TRAFAC class translation factor GTPase superfamily. Classic translation factor GTPase family. EIF2G subfamily. In terms of assembly, heterotrimer composed of an alpha, a beta and a gamma chain. Requires Mg(2+) as cofactor.

The catalysed reaction is GTP + H2O = GDP + phosphate + H(+). Functionally, eIF-2 functions in the early steps of protein synthesis by forming a ternary complex with GTP and initiator tRNA. This Methanocaldococcus jannaschii (strain ATCC 43067 / DSM 2661 / JAL-1 / JCM 10045 / NBRC 100440) (Methanococcus jannaschii) protein is Translation initiation factor 2 subunit gamma.